A 436-amino-acid chain; its full sequence is Protein disulfide-isomerase (436 aa).

The Thioredoxin domain occupies 216–365 (FLAGKIDPSI…VEDATESAKA (150 aa)). Residues Cys-266 and Cys-269 each act as nucleophile in the active site. Cysteines 266 and 269 form a disulfide. A disordered region spans residues 328 to 436 (TLVPHCRGSR…ASASSVKDEL (109 aa)). The span at 334–343 (RGSRPVHRRE) shows a compositional bias: basic residues. Low complexity-rich tracts occupy residues 362–377 (SAKA…AASA) and 385–436 (VKSG…KDEL). The Prevents secretion from ER signature appears at 433 to 436 (KDEL).

It belongs to the protein disulfide isomerase family.

It localises to the endoplasmic reticulum lumen. The catalysed reaction is Catalyzes the rearrangement of -S-S- bonds in proteins.. Participates in the folding of proteins containing disulfide bonds, may be involved in glycosylation, prolyl hydroxylation and triglyceride transfer. The protein is Protein disulfide-isomerase of Alternaria alternata (Alternaria rot fungus).